An 821-amino-acid polypeptide reads, in one-letter code: DNA gyrase subunit A (821 aa).

In terms of domain architecture, Topo IIA-type catalytic spans 35-500 (LPDVRDGLKP…GLETIEDEDL (466 aa)). Y123 functions as the O-(5'-phospho-DNA)-tyrosine intermediate in the catalytic mechanism. A GyrA-box motif is present at residues 527-533 (QKRGGKG).

This sequence belongs to the type II topoisomerase GyrA/ParC subunit family. In terms of assembly, heterotetramer, composed of two GyrA and two GyrB chains. In the heterotetramer, GyrA contains the active site tyrosine that forms a transient covalent intermediate with DNA, while GyrB binds cofactors and catalyzes ATP hydrolysis.

It localises to the cytoplasm. The catalysed reaction is ATP-dependent breakage, passage and rejoining of double-stranded DNA.. Functionally, a type II topoisomerase that negatively supercoils closed circular double-stranded (ds) DNA in an ATP-dependent manner to modulate DNA topology and maintain chromosomes in an underwound state. Negative supercoiling favors strand separation, and DNA replication, transcription, recombination and repair, all of which involve strand separation. Also able to catalyze the interconversion of other topological isomers of dsDNA rings, including catenanes and knotted rings. Type II topoisomerases break and join 2 DNA strands simultaneously in an ATP-dependent manner. In Bacillus subtilis (strain 168), this protein is DNA gyrase subunit A.